A 671-amino-acid polypeptide reads, in one-letter code: Probable boron transporter 6 (671 aa).

Topologically, residues 1–37 are cytoplasmic; the sequence is MKSEGESGPFQGILRDIEGRRKCYKQDWIRGIKTGIR. The helical transmembrane segment at 38–58 threads the bilayer; sequence ILAPTCYIFFASSLPVVAFGE. The Extracellular segment spans residues 59–77; the sequence is QLSKHTGGALSAVETLAST. A helical transmembrane segment spans residues 78-98; sequence SICGIIHAIFGGQPLLIVGVA. Residues 99–123 lie on the Cytoplasmic side of the membrane; it reads EPTIIMYTYLYSFCISRPDIGRELY. A helical transmembrane segment spans residues 124–144; the sequence is LAWVAWVCVWTSVLLILLSIF. The Extracellular segment spans residues 145 to 157; it reads NAGTIITRFTRIA. The helical transmembrane segment at 158–178 threads the bilayer; it reads GELFGMLIAVLFLQEAIKGLI. Over 179–195 the chain is Cytoplasmic; the sequence is SEFHAPEIKNQETGKSH. The helical transmembrane segment at 196–216 threads the bilayer; that stretch reads FLLIYANGLLAVIFSLGLLIT. Topologically, residues 217–235 are extracellular; sequence ALKSRRAKSWKYGFGWLRS. Residues 236–256 traverse the membrane as a helical segment; that stretch reads FIGDYGVPLMVLLWTALSYTV. The Cytoplasmic portion of the chain corresponds to 257 to 291; that stretch reads PSEVLPSVPRRLFCPLPWEPASLYHWTVVKDMGKV. The helical transmembrane segment at 292 to 312 threads the bilayer; the sequence is PIMYILAAFIPGVMIAGLYFF. Over 313–332 the chain is Extracellular; it reads DHSVASQMAQQKEFNLKNPS. Residues 333–353 form a helical membrane-spanning segment; it reads AYHYDIFLLGIITLICGLLGL. The Cytoplasmic segment spans residues 354–469; it reads PPSNGVLPQA…EQRVSNLLQS (116 aa). Residues 470–490 form a helical membrane-spanning segment; that stretch reads VLVGLTLLAVTVIKMIPSSVL. Residues 491–557 are Extracellular-facing; the sequence is WGYFAYMAID…QLVYFLLCYG (67 aa). A helical transmembrane segment spans residues 558–578; sequence MTWIPMAGIFFPALFFLLISI. The Cytoplasmic portion of the chain corresponds to 579-671; sequence REHLLPKLFD…EEKHVTFEPH (93 aa).

This sequence belongs to the anion exchanger (TC 2.A.31.3) family.

It localises to the membrane. Functionally, probable boron transporter. Boron is essential for maintaining the integrity of plants cell walls. This Arabidopsis thaliana (Mouse-ear cress) protein is Probable boron transporter 6 (BOR6).